The chain runs to 276 residues: Large ribosomal subunit protein uL2 (276 aa).

The tract at residues 219-268 (TVRGSVMNPNDHPHGGGEGRQPVGRKSPMTPWGKPALGLKTRNKKAKSSK) is disordered.

Belongs to the universal ribosomal protein uL2 family. Part of the 50S ribosomal subunit. Forms a bridge to the 30S subunit in the 70S ribosome.

In terms of biological role, one of the primary rRNA binding proteins. Required for association of the 30S and 50S subunits to form the 70S ribosome, for tRNA binding and peptide bond formation. It has been suggested to have peptidyltransferase activity; this is somewhat controversial. Makes several contacts with the 16S rRNA in the 70S ribosome. The polypeptide is Large ribosomal subunit protein uL2 (Lactococcus lactis subsp. cremoris (strain MG1363)).